The chain runs to 328 residues: MPNLHLVRSLKLHGDRCWSVDISKGLLATGSADRKIKLVDVRNFKLVEELDDTAHKKAVRSVAWRPHCNVLAAGSFDTTVSIWGRDDDDYSGETELLAVIEGHENEVKSVAWSHDGAYLATCSRDKSVWIWEADELSEEFECNSVLQEHSQDVKHIVWHASRLLLASSSYDDTVRIWAEQDDDWECAAVLSGHGGTVWCSDFERAETGIRLCSGSDDTTVRIWRCLTDDADVFDKEWIQETVLPAVHTRAVYSVSWSADGLIASVGSDGVLAVYKEVQAGRWEVVARVDCAHTVYEINVVKWLALDGRVLLVTGGDDGCVNVWELREE.

7 WD repeats span residues 12-49 (LHGD…LVEE), 54-93 (AHKK…YSGE), 102-141 (GHEN…EEFE), 148-187 (EHSQ…WECA), 192-233 (GHGG…ADVF), 246-284 (VHTR…RWEV), and 291-328 (AHTV…LREE).

It belongs to the WD repeat CIA1 family. In terms of assembly, interacts with NAR1.

Its subcellular location is the cytoplasm. It localises to the nucleus. Essential component of the cytosolic iron-sulfur (Fe/S) protein assembly machinery. Required for the maturation of extramitochondrial Fe/S proteins. The sequence is that of Probable cytosolic iron-sulfur protein assembly protein 1 from Eremothecium gossypii (strain ATCC 10895 / CBS 109.51 / FGSC 9923 / NRRL Y-1056) (Yeast).